Reading from the N-terminus, the 525-residue chain is Peptide chain release factor 3 (525 aa).

In terms of domain architecture, tr-type G spans 11-279 (DKRRTFAIIS…TYLEYAPQPA (269 aa)). GTP-binding positions include 20 to 27 (SHPDAGKT), 88 to 92 (DTPGH), and 142 to 145 (NKLD).

The protein belongs to the TRAFAC class translation factor GTPase superfamily. Classic translation factor GTPase family. PrfC subfamily.

The protein localises to the cytoplasm. Increases the formation of ribosomal termination complexes and stimulates activities of RF-1 and RF-2. It binds guanine nucleotides and has strong preference for UGA stop codons. It may interact directly with the ribosome. The stimulation of RF-1 and RF-2 is significantly reduced by GTP and GDP, but not by GMP. This chain is Peptide chain release factor 3, found in Levilactobacillus brevis (strain ATCC 367 / BCRC 12310 / CIP 105137 / JCM 1170 / LMG 11437 / NCIMB 947 / NCTC 947) (Lactobacillus brevis).